A 506-amino-acid chain; its full sequence is Maturase K (506 aa).

It belongs to the intron maturase 2 family. MatK subfamily.

The protein localises to the plastid. Its subcellular location is the chloroplast. Its function is as follows. Usually encoded in the trnK tRNA gene intron. Probably assists in splicing its own and other chloroplast group II introns. In Gaultheria procumbens (Wintergreen), this protein is Maturase K.